The primary structure comprises 195 residues: Triosephosphate isomerase, cytosolic (195 aa).

The active-site Electrophile is histidine 37. Catalysis depends on glutamate 107, which acts as the Proton acceptor.

Belongs to the triosephosphate isomerase family. Homodimer.

It localises to the cytoplasm. It carries out the reaction D-glyceraldehyde 3-phosphate = dihydroxyacetone phosphate. It participates in carbohydrate biosynthesis; gluconeogenesis. Its pathway is carbohydrate degradation; glycolysis; D-glyceraldehyde 3-phosphate from glycerone phosphate: step 1/1. The sequence is that of Triosephosphate isomerase, cytosolic from Lactuca sativa (Garden lettuce).